Here is a 126-residue protein sequence, read N- to C-terminus: Aspartate 1-decarboxylase (126 aa).

Catalysis depends on serine 25, which acts as the Schiff-base intermediate with substrate; via pyruvic acid. Serine 25 carries the post-translational modification Pyruvic acid (Ser). Threonine 57 provides a ligand contact to substrate. Residue tyrosine 58 is the Proton donor of the active site. Residue 73–75 participates in substrate binding; that stretch reads GAA.

This sequence belongs to the PanD family. Heterooctamer of four alpha and four beta subunits. Requires pyruvate as cofactor. Post-translationally, is synthesized initially as an inactive proenzyme, which is activated by self-cleavage at a specific serine bond to produce a beta-subunit with a hydroxyl group at its C-terminus and an alpha-subunit with a pyruvoyl group at its N-terminus.

It is found in the cytoplasm. It catalyses the reaction L-aspartate + H(+) = beta-alanine + CO2. Its pathway is cofactor biosynthesis; (R)-pantothenate biosynthesis; beta-alanine from L-aspartate: step 1/1. In terms of biological role, catalyzes the pyruvoyl-dependent decarboxylation of aspartate to produce beta-alanine. This is Aspartate 1-decarboxylase from Azotobacter vinelandii (strain DJ / ATCC BAA-1303).